The following is a 320-amino-acid chain: GGLLLLGLLIVLLQAAPAVQCLRSAESRSNSLKIVGSILFPVKVYVKLDHSSPHILCVTNRLRNSELIDPVFRWNGPSGYLSSANSSVQISPTGTLILGHFRSDLSGVYTCSLVYKLIAAQPDKRLTIKYHIYAYSDPQYYYELTVQYHAAPCNSFHNTSFGRALLQILSKLVADLSCEVSLIKSECHHVKMQRGGLQSEMFFKFSVTCLDTENNKLCRQSACDKPHRLHKAKDLIERFFKREVEIRKKSTEPLPEIYYIEGTLQMVWVDRCYPGYGINAVRHPDCPECCVICSPRSYNPSNGIHCLQCDTSLIYGATTC.

N-linked (GlcNAc...) asparagine glycans are attached at residues Asn-85 and Asn-158.

This sequence belongs to the zona pellucida-binding protein Sp38 family.

The protein localises to the cytoplasmic vesicle. The protein resides in the secretory vesicle. Its subcellular location is the acrosome. It localises to the secreted. It is found in the acrosome membrane. In terms of biological role, plays a role in sperm morphogenesis and in sperm-oocyte interaction during fertilization. The polypeptide is Zona pellucida-binding protein 1 (ZPBP1) (Gallus gallus (Chicken)).